The sequence spans 73 residues: MAVEKVNSSSSLAEVIDRILDKGIVIDAWVRVSLVGIELLSIEARIVIASVETYLRYAEAVGLTSQAAVPSAA.

It belongs to the gas vesicle GvpA family. The gas vesicle shell is 2 nm thick and consists of a single layer of this protein. It forms helical ribs nearly perpendicular to the long axis of the vesicle.

It localises to the gas vesicle shell. Functionally, gas vesicles are hollow, gas filled proteinaceous nanostructures found in some microorganisms. During planktonic growth they allow positioning of the organism at a favorable depth for light or nutrient acquisition. GvpA forms the protein shell. The polypeptide is Gas vesicle protein A (Nostoc punctiforme (strain ATCC 29133 / PCC 73102)).